Reading from the N-terminus, the 348-residue chain is D-alanine--D-alanine ligase (348 aa).

The ATP-grasp domain maps to 132 to 334 (KRILEVAGVP…YSDLIKELVV (203 aa)). An ATP-binding site is contributed by 162–217 (LEKLTFPVFVKPANMGSSVGISKAENESELRSAIDLALKYDSRILIEQGVVAREIE). The Mg(2+) site is built by D288, E301, and N303.

The protein belongs to the D-alanine--D-alanine ligase family. Mg(2+) is required as a cofactor. Requires Mn(2+) as cofactor.

It is found in the cytoplasm. The catalysed reaction is 2 D-alanine + ATP = D-alanyl-D-alanine + ADP + phosphate + H(+). It functions in the pathway cell wall biogenesis; peptidoglycan biosynthesis. In terms of biological role, cell wall formation. This is D-alanine--D-alanine ligase from Streptococcus thermophilus (strain ATCC BAA-491 / LMD-9).